A 137-amino-acid polypeptide reads, in one-letter code: Small ribosomal subunit protein uS9 (137 aa).

The segment at 105–137 (LKTEGYLKRDPRAVERKKYGLRKARKAPQYSKR) is disordered. Residues 109 to 122 (GYLKRDPRAVERKK) show a composition bias toward basic and acidic residues. Over residues 123–137 (YGLRKARKAPQYSKR) the composition is skewed to basic residues.

This sequence belongs to the universal ribosomal protein uS9 family.

This Synechococcus sp. (strain JA-3-3Ab) (Cyanobacteria bacterium Yellowstone A-Prime) protein is Small ribosomal subunit protein uS9.